The sequence spans 211 residues: Thiamine-phosphate synthase (211 aa).

4-amino-2-methyl-5-(diphosphooxymethyl)pyrimidine-binding positions include 39-41 and Asn-71; that span reads QLR. 2 residues coordinate Mg(2+): Asp-72 and Asp-91. Ser-110 serves as a coordination point for 4-amino-2-methyl-5-(diphosphooxymethyl)pyrimidine. Position 136–138 (136–138) interacts with 2-[(2R,5Z)-2-carboxy-4-methylthiazol-5(2H)-ylidene]ethyl phosphate; that stretch reads TGT. Lys-139 lines the 4-amino-2-methyl-5-(diphosphooxymethyl)pyrimidine pocket. Residues Gly-167 and 187–188 contribute to the 2-[(2R,5Z)-2-carboxy-4-methylthiazol-5(2H)-ylidene]ethyl phosphate site; that span reads VS.

Belongs to the thiamine-phosphate synthase family. Requires Mg(2+) as cofactor.

The enzyme catalyses 2-[(2R,5Z)-2-carboxy-4-methylthiazol-5(2H)-ylidene]ethyl phosphate + 4-amino-2-methyl-5-(diphosphooxymethyl)pyrimidine + 2 H(+) = thiamine phosphate + CO2 + diphosphate. It catalyses the reaction 2-(2-carboxy-4-methylthiazol-5-yl)ethyl phosphate + 4-amino-2-methyl-5-(diphosphooxymethyl)pyrimidine + 2 H(+) = thiamine phosphate + CO2 + diphosphate. The catalysed reaction is 4-methyl-5-(2-phosphooxyethyl)-thiazole + 4-amino-2-methyl-5-(diphosphooxymethyl)pyrimidine + H(+) = thiamine phosphate + diphosphate. It participates in cofactor biosynthesis; thiamine diphosphate biosynthesis; thiamine phosphate from 4-amino-2-methyl-5-diphosphomethylpyrimidine and 4-methyl-5-(2-phosphoethyl)-thiazole: step 1/1. Condenses 4-methyl-5-(beta-hydroxyethyl)thiazole monophosphate (THZ-P) and 2-methyl-4-amino-5-hydroxymethyl pyrimidine pyrophosphate (HMP-PP) to form thiamine monophosphate (TMP). The protein is Thiamine-phosphate synthase of Xanthobacter autotrophicus (strain ATCC BAA-1158 / Py2).